A 359-amino-acid polypeptide reads, in one-letter code: Src kinase-associated phosphoprotein 1 (359 aa).

The region spanning N107–K210 is the PH domain. Phosphotyrosine is present on residues Y142, Y219, and Y232. The segment covering Y219 to G237 has biased composition (acidic residues). A disordered region spans residues Y219–D239. Residues Y271 and Y295 each carry the phosphotyrosine; by FYN modification. The segment at R290–Y295 is interaction with FYB1. Residues D294–E355 enclose the SH3 domain.

This sequence belongs to the SKAP family. As to quaternary structure, homodimer. Interacts with FYN. Interacts with PTPRC. Interacts with GRB2 when phosphorylated on Tyr-271. Interacts with FYB1, which is required for SKAP2 protein stability. Part of a complex consisting of SKAP1, FYB1 and CLNK. Interacts with RASGRP1. Interacts with FYB2. In terms of processing, phosphorylated on tyrosines. Phosphorylation by FYN on Tyr-271 is required for GRB2 interaction. Phosphorylation by FYN on Tyr-295 abolishes interaction with FYB1. Tyr-232 is dephosphorylated by PTPRC. In terms of tissue distribution, highly expressed in thymocytes and peripheral blood lymphocytes. Also expressed in spleen cells and testis. Present in T-cells (at protein level).

The protein resides in the cytoplasm. It is found in the nucleus. The protein localises to the cell membrane. Positively regulates T-cell receptor signaling by enhancing the MAP kinase pathway. Required for optimal conjugation between T-cells and antigen-presenting cells by promoting the clustering of integrin ITGAL on the surface of T-cells. May be involved in high affinity immunoglobulin epsilon receptor signaling in mast cells. The chain is Src kinase-associated phosphoprotein 1 (SKAP1) from Homo sapiens (Human).